Here is a 123-residue protein sequence, read N- to C-terminus: UPF0102 protein Csal_2201 (123 aa).

The protein belongs to the UPF0102 family.

The sequence is that of UPF0102 protein Csal_2201 from Chromohalobacter salexigens (strain ATCC BAA-138 / DSM 3043 / CIP 106854 / NCIMB 13768 / 1H11).